The primary structure comprises 68 residues: Palustrin-1c (68 aa).

The N-terminal stretch at 1 to 22 is a signal peptide; it reads MFTTKKSLLLLFFLGTISLSLC. Positions 23-39 are excised as a propeptide; it reads EEERGADEEEGDGEKLT. Residues Cys-62 and Cys-68 are joined by a disulfide bond.

Expressed by the skin glands.

The protein localises to the secreted. Antimicrobial activity against Gram-negative bacterium E.coli. Stimulates insulin release. The sequence is that of Palustrin-1c from Lithobates palustris (Pickerel frog).